The chain runs to 364 residues: Mannose-1-phosphate guanyltransferase (364 aa).

This sequence belongs to the transferase hexapeptide repeat family.

Its subcellular location is the cytoplasm. The catalysed reaction is alpha-D-mannose 1-phosphate + GTP + H(+) = GDP-alpha-D-mannose + diphosphate. It participates in nucleotide-sugar biosynthesis; GDP-alpha-D-mannose biosynthesis; GDP-alpha-D-mannose from alpha-D-mannose 1-phosphate (GTP route): step 1/1. Involved in cell wall synthesis where it is required for glycosylation. Involved in cell cycle progression through cell-size checkpoint. This is Mannose-1-phosphate guanyltransferase (mpg1) from Aspergillus fumigatus (strain ATCC MYA-4609 / CBS 101355 / FGSC A1100 / Af293) (Neosartorya fumigata).